The sequence spans 617 residues: Zinc metalloproteinase nas-36 (617 aa).

The signal sequence occupies residues 1 to 22; it reads MRLCHSIILFNSLISISICSKA. The propeptide occupies 23-126; it reads DDPALLVASE…SKDKTKRLRR (104 aa). A Peptidase M12A domain is found at 127–322; sequence SFVSDKTATW…VATINTAYCK (196 aa). 9 cysteine pairs are disulfide-bonded: C169-C321, C192-C211, C325-C346, C348-C357, C368-C397, C425-C445, C519-C550, C523-C555, and C535-C540. N-linked (GlcNAc...) asparagine glycosylation is present at N174. Position 219 (H219) interacts with Zn(2+). E220 is a catalytic residue. Zn(2+) is bound by residues H223 and H229. An EGF-like domain is found at 317–358; the sequence is NTAYCKDECKSEKTKCENGGYMRPSKCSECLCPDGLGGEKCE. Positions 368–482 constitute a CUB domain; that stretch reads CGGIIKLTEE…IGFKIQAKST (115 aa). Residues 507 to 556 form the TSP type-1 domain; sequence PNVWADWGEWSMCSRTCGGCGIRSRVRSCRSKKCEGRRQEFGTCNLKACP.

Zn(2+) is required as a cofactor. As to expression, expressed in hypodermal cells. Also detected in the hypodermal seam cells in L4 larvae and young adults. In old adult hermaphrodites, it localizes to the vulva (at protein level).

It localises to the secreted. Metalloprotease. Involved in molting, a process during larval stages in which a new cuticle is formed and the old cuticle is shed. This chain is Zinc metalloproteinase nas-36 (nas-36), found in Caenorhabditis elegans.